Here is a 201-residue protein sequence, read N- to C-terminus: Peptidyl-prolyl cis-trans isomerase FKBP11 (201 aa).

The first 27 residues, Met-1–Ala-27, serve as a signal peptide directing secretion. Residues Gly-57–Ile-144 form the PPIase FKBP-type domain. The helical transmembrane segment at Ile-156 to Leu-176 threads the bilayer.

Belongs to the FKBP-type PPIase family. As to quaternary structure, interacts with IFITM5.

It localises to the membrane. It catalyses the reaction [protein]-peptidylproline (omega=180) = [protein]-peptidylproline (omega=0). Functionally, PPIases accelerate the folding of proteins during protein synthesis. This is Peptidyl-prolyl cis-trans isomerase FKBP11 (Fkbp11) from Mus musculus (Mouse).